A 66-amino-acid chain; its full sequence is Large ribosomal subunit protein uL29 (66 aa).

It belongs to the universal ribosomal protein uL29 family.

This chain is Large ribosomal subunit protein uL29, found in Thermoplasma volcanium (strain ATCC 51530 / DSM 4299 / JCM 9571 / NBRC 15438 / GSS1).